The sequence spans 470 residues: Ribulose bisphosphate carboxylase large chain (470 aa).

Residues N115 and T165 each coordinate substrate. The active-site Proton acceptor is K167. Residue K169 participates in substrate binding. Mg(2+) contacts are provided by K193, D195, and E196. K193 is modified (N6-carboxylysine). H286 serves as the catalytic Proton acceptor. 3 residues coordinate substrate: R287, H319, and S371.

This sequence belongs to the RuBisCO large chain family. Type I subfamily. Heterohexadecamer of 8 large chains and 8 small chains. It depends on Mg(2+) as a cofactor.

It localises to the carboxysome. The enzyme catalyses 2 (2R)-3-phosphoglycerate + 2 H(+) = D-ribulose 1,5-bisphosphate + CO2 + H2O. The catalysed reaction is D-ribulose 1,5-bisphosphate + O2 = 2-phosphoglycolate + (2R)-3-phosphoglycerate + 2 H(+). In terms of biological role, ruBisCO catalyzes two reactions: the carboxylation of D-ribulose 1,5-bisphosphate, the primary event in carbon dioxide fixation, as well as the oxidative fragmentation of the pentose substrate in the photorespiration process. Both reactions occur simultaneously and in competition at the same active site. The sequence is that of Ribulose bisphosphate carboxylase large chain from Prochlorococcus marinus (strain NATL1A).